Consider the following 155-residue polypeptide: Sec-independent protein translocase protein TatB (155 aa).

A helical membrane pass occupies residues 1–21 (MFGMGFFEILVVLVVAIIFLG). The segment at 109-155 (SLENNAPPKHLNKEVSNREVFHNEPPKEIELIANNNTTKHDKEKEHV) is disordered. 2 stretches are compositionally biased toward basic and acidic residues: residues 119-138 (LNKEVSNREVFHNEPPKEIE) and 146-155 (TKHDKEKEHV).

The protein belongs to the TatB family. In terms of assembly, the Tat system comprises two distinct complexes: a TatABC complex, containing multiple copies of TatA, TatB and TatC subunits, and a separate TatA complex, containing only TatA subunits. Substrates initially bind to the TatABC complex, which probably triggers association of the separate TatA complex to form the active translocon.

The protein localises to the cell inner membrane. Its function is as follows. Part of the twin-arginine translocation (Tat) system that transports large folded proteins containing a characteristic twin-arginine motif in their signal peptide across membranes. Together with TatC, TatB is part of a receptor directly interacting with Tat signal peptides. TatB may form an oligomeric binding site that transiently accommodates folded Tat precursor proteins before their translocation. The chain is Sec-independent protein translocase protein TatB from Helicobacter acinonychis (strain Sheeba).